We begin with the raw amino-acid sequence, 67 residues long: Non-specific lipid-transfer protein 2 (67 aa).

4 disulfide bridges follow: Cys-3–Cys-35, Cys-11–Cys-25, Cys-26–Cys-61, and Cys-37–Cys-67.

It belongs to the plant LTP family. In terms of assembly, monomer. Disulfide bonds.

Its function is as follows. Plant non-specific lipid-transfer proteins transfer phospholipids as well as galactolipids across membranes. May play a role in wax or cutin deposition in the cell walls of expanding epidermal cells and certain secretory tissues. This chain is Non-specific lipid-transfer protein 2, found in Apium graveolens var. rapaceum (Celeriac).